Reading from the N-terminus, the 211-residue chain is Probable nicotinate-nucleotide adenylyltransferase (211 aa).

Belongs to the NadD family.

It carries out the reaction nicotinate beta-D-ribonucleotide + ATP + H(+) = deamido-NAD(+) + diphosphate. It participates in cofactor biosynthesis; NAD(+) biosynthesis; deamido-NAD(+) from nicotinate D-ribonucleotide: step 1/1. In terms of biological role, catalyzes the reversible adenylation of nicotinate mononucleotide (NaMN) to nicotinic acid adenine dinucleotide (NaAD). The polypeptide is Probable nicotinate-nucleotide adenylyltransferase (Wigglesworthia glossinidia brevipalpis).